Reading from the N-terminus, the 170-residue chain is Myelin-associated oligodendrocyte basic protein (170 aa).

The disordered stretch occupies residues 69–170 (SRRATSPQKP…GSPTRAPRFW (102 aa)). Over residues 82–92 (PAASPVVVRAP) the composition is skewed to low complexity. Residues Ser85, Ser98, and Ser107 each carry the phosphoserine modification. Residues 93 to 101 (PAKPKSPPR) form repeat 1. The span at 93–114 (PAKPKSPPRPAKPRSPPIPAKP) shows a compositional bias: pro residues. Residues 93–119 (PAKPKSPPRPAKPRSPPIPAKPRSPSR) are 3 X 9 AA approximate tandem repeats. The stretch at 105-110 (PRSPPI) is one 2; half-length repeat. Copy 3 of the repeat occupies 111–119 (PAKPRSPSR). Residues 118–130 (SRTERQPRPRPEV) show a composition bias toward basic and acidic residues. The span at 138–151 (KPPQKSKQPARSSP) shows a compositional bias: low complexity.

In terms of tissue distribution, expressed predominantly in oligodendrocytes, in CNS myelin of the cerebrum and spinal cord. No expression seen in sciatic nerve.

Its subcellular location is the cytoplasm. It localises to the perinuclear region. In terms of biological role, may play a role in compacting or stabilizing the myelin sheath, possibly by binding the negatively charged acidic phospholipids of the cytoplasmic membrane. This chain is Myelin-associated oligodendrocyte basic protein (Mobp), found in Rattus norvegicus (Rat).